Here is a 223-residue protein sequence, read N- to C-terminus: ATP phosphoribosyltransferase (223 aa).

It belongs to the ATP phosphoribosyltransferase family. Short subfamily. In terms of assembly, heteromultimer composed of HisG and HisZ subunits.

It is found in the cytoplasm. The enzyme catalyses 1-(5-phospho-beta-D-ribosyl)-ATP + diphosphate = 5-phospho-alpha-D-ribose 1-diphosphate + ATP. It participates in amino-acid biosynthesis; L-histidine biosynthesis; L-histidine from 5-phospho-alpha-D-ribose 1-diphosphate: step 1/9. In terms of biological role, catalyzes the condensation of ATP and 5-phosphoribose 1-diphosphate to form N'-(5'-phosphoribosyl)-ATP (PR-ATP). Has a crucial role in the pathway because the rate of histidine biosynthesis seems to be controlled primarily by regulation of HisG enzymatic activity. This chain is ATP phosphoribosyltransferase, found in Sphingopyxis alaskensis (strain DSM 13593 / LMG 18877 / RB2256) (Sphingomonas alaskensis).